The primary structure comprises 118 residues: UPF0231 protein PM0457 (118 aa).

The protein belongs to the UPF0231 family.

The chain is UPF0231 protein PM0457 from Pasteurella multocida (strain Pm70).